We begin with the raw amino-acid sequence, 866 residues long: Protein aubergine (866 aa).

M1 is modified (N-acetylmethionine). The tract at residues 1–61 (MNLPPNPVIA…GGGDAQVGPS (61 aa)) is disordered. R11, R13, R15, and R17 each carry symmetric dimethylarginine. Gly residues predominate over residues 46-56 (ASGGNGGGGDA). The region spanning 281 to 390 (TLYNILSDAI…IIPELARATG (110 aa)) is the PAZ domain. Positions 555-852 (IVMVVMRSPN…LAFLVAESIN (298 aa)) constitute a Piwi domain.

This sequence belongs to the argonaute family. Piwi subfamily. In terms of assembly, component of the ping-pong piRNA processing (4P) complex consisting of krimp, aub and AGO3. Interacts (via N-terminus when symmetrically dimethylated on arginine residues) with krimp (via tudor domain); this interaction requires methylation of at least one N-terminal arginie residue. Interacts with vas and AGO3. May form part of a piRNA processing complex consisting of tud, aub and AGO3. Interacts (when symmetrically dimethylated on arginine residues) with tud; methylation and/or interaction requires association with piRNA. Interacts (via N-terminus and when associated with piRNA) with csul/PRMT5; the interaction recruits the PRMT5 methylosome complex to modify N-terminal arginines by symmetrical dimethylation but involves residues other than the arginines to be modified. Forms a complex with smg, twin, AGO3, nanos mRNA and piRNAs that targets the nanos 3'-untranslated region, in early embryos. Interacts with nanos mRNA and rump (in an RNA-dependent manner). Interacts with papi and vret. Interacts with me31B. Post-translationally, symmetrical dimethylation of arginines (sDMA) on Arg-11, Arg-13 and/or Arg-15 by csul/PRMT5/DART5, is required for binding to tud, localization to the pole plasm and association with the correct piRNAs. SDMA on Arg-11, Arg-13, Arg-15 and/or Arg-17 is required for binding to krimp and stable recruitment to subregions of the nuage. Methylation state does not affect protein stability. SDMA plays an important role in ping-pong amplification of piRNAs and is essential for function in vivo. Methylation state functions as an indicator of its piRNA binding state. PiRNA binding promotes sDMA modification; piRNA binding induces a conformational change that exposes the N-terminal arginines, making them available to the methylosome complex. Expressed in ovary. In the germarium, found in germline stem and cyst cells. In egg chambers from stage 6, expressed both in nurse cells and oocytes. In embryos, accumulates in the pole cells, although low expression is detected throughout the entire embryo. In testis, expressed in germline stem cells, gonialblast and spermatogonia cells (at protein level). In the adult brain, expressed in the ellipsoid body, the mushroom body subdivision in the peduncle and the cell body layer. Expressed specifically in alpha'/beta' and gamma neurons.

Its subcellular location is the cytoplasm. The protein resides in the cytosol. It is found in the perinuclear region. The protein localises to the cytoplasmic ribonucleoprotein granule. In terms of biological role, component of the perinuclear meiotic nuage, a germline-specific subcellular membraneless ribonucleoprotein compartment involved in production of transposable element-repressing Piwi-interacting RNA (piRNA)-induced silencing complexes (piRISCs), which are essential for maintaining germline integrity during oogenesis; essential for the formation and/or structural integrity of nuage particles. Acts via the Piwi-interacting RNA (piRNA) metabolic process, which mediates the repression of transposable elements during meiosis by forming complexes composed of piRNAs and Piwi proteins and governs the methylation and subsequent repression of transposons. Directly binds piRNAs, a class of 24 to 30 nucleotide RNAs that are generated by a Dicer-independent mechanism and are primarily derived from transposons and other repeated sequence elements. Shows RNA cleavage or slicer activity; including aub-piRNA complexes from ovary and testis. When loaded with guide piRNAs recognizes and cleaves complementary RNAs to repress their expression and produce complementary piRNAs. Together with Piwi protein AGO3 recruited to subregions of the perinuclear nuage by krimp, which coordinates their activity in the ping-pong amplification step of secondary piRNA biogenesis. Krimp recruits piRNA bound aub and unbound AGO3, bringing them into close proximity to facilitate the loading onto AGO3 of freshly cut piRNAs generated by aub cleavage of target sequences; krimp recognizes the piRNA loading state of the Piwi proteins via symmetrically dimethylated arginine modification in their N-terminus. Important for asymmetric ping-pong amplification to bias production towards antisense piRNAs capable of silencing transposable elements. Required for the localization of mael and krimp to the meiotic nuage. In ovary, associates predominantly with antisense piRNAs that contain uridine at their 5' end. In testis, associates with Su(Ste) antisense piRNAs (most abundant class of piRNAs found in complex with aub in testes) and negatively regulates Ste expression, most likely by cleaving its transcripts. Also in testis, may repress translation of vas when associated with a piRNA derived from chromosome X, termed AT-chX-1, whose sequence shows strong complementarity to vas mRNA. Involved in repression of long interspersed nuclear elements (LINEs) including HeT-A, I-element and TART LINEs. Repression of specialized telomeric retroelements HeT-A and TART is involved in telomere regulation; Drosophila telomeres being maintained by transposition of specialized telomeric retroelements. Also involved in telomeric trans-silencing, a repression mechanism by which a transposon or a transgene inserted in subtelomeric heterochromatin has the capacity to repress in trans, in the female germline, a homologous transposon, or transgene located in euchromatin. Involved in the suppression of meiotic drive of sex chromosomes and autosomes. Involved in transposon silencing in the adult brain. Required for dorsal-ventral as well as anterior-posterior patterning of the egg. Required during oogenesis for primordial germ cell formation and activation of RNA interference. During early oogenesis, required for osk mRNA silencing and polarization of the microtubule cytoskeleton. During mid-oogenesis, required for osk mRNA localization to the posterior pole and efficient translation of osk and grk. During embryogenesis, required for posterior localization of nanos (nos) mRNA, independently of osk, and pole cell formation. Forms a complex with smg, twin, AGO3 and specific piRNAs that targets nanos mRNA (and probably other maternal mRNAS) for deadenylation promoting its decay during early embryogenesis. The polypeptide is Protein aubergine (Drosophila melanogaster (Fruit fly)).